The following is a 147-amino-acid chain: Large ribosomal subunit protein bL9 (147 aa).

It belongs to the bacterial ribosomal protein bL9 family.

In terms of biological role, binds to the 23S rRNA. In Mycoplasmoides gallisepticum (strain R(low / passage 15 / clone 2)) (Mycoplasma gallisepticum), this protein is Large ribosomal subunit protein bL9.